We begin with the raw amino-acid sequence, 420 residues long: Dihydrolipoyllysine-residue succinyltransferase component of 2-oxoglutarate dehydrogenase complex (420 aa).

One can recognise a Lipoyl-binding domain in the interval 3–78 (KINILVPDLP…ISQQTLGEIN (76 aa)). Residue Lys44 is modified to N6-lipoyllysine. Residues His391 and Asp395 contribute to the active site.

This sequence belongs to the 2-oxoacid dehydrogenase family. In terms of assembly, forms a 24-polypeptide structural core with octahedral symmetry. Part of the 2-oxoglutarate dehydrogenase (OGDH) complex composed of E1 (2-oxoglutarate dehydrogenase), E2 (dihydrolipoamide succinyltransferase) and E3 (dihydrolipoamide dehydrogenase); the complex contains multiple copies of the three enzymatic components (E1, E2 and E3). Requires (R)-lipoate as cofactor.

The catalysed reaction is N(6)-[(R)-dihydrolipoyl]-L-lysyl-[protein] + succinyl-CoA = N(6)-[(R)-S(8)-succinyldihydrolipoyl]-L-lysyl-[protein] + CoA. It participates in amino-acid degradation; L-lysine degradation via saccharopine pathway; glutaryl-CoA from L-lysine: step 6/6. Its function is as follows. E2 component of the 2-oxoglutarate dehydrogenase (OGDH) complex which catalyzes the second step in the conversion of 2-oxoglutarate to succinyl-CoA and CO(2). This Buchnera aphidicola subsp. Acyrthosiphon pisum (strain APS) (Acyrthosiphon pisum symbiotic bacterium) protein is Dihydrolipoyllysine-residue succinyltransferase component of 2-oxoglutarate dehydrogenase complex (sucB).